A 430-amino-acid polypeptide reads, in one-letter code: Mannosylglucosylglycerate synthase (430 aa).

Belongs to the glycosyltransferase group 1 family. A divalent metal cation is required as a cofactor.

It catalyses the reaction (2R)-2-O-(alpha-D-glucopyranosyl)-glycerate + GDP-alpha-D-mannose = (2R)-2-O-[alpha-D-mannopyranosyl-(1-&gt;2)-alpha-D-glucopyranosyl]-glycerate + GDP + H(+). In terms of biological role, involved in the biosynthesis of the compatible solute mannosylglucosylglycerate through a nonphosphorylating pathway. Catalyzes the synthesis of mannosylglucosylglycerate (MGG) from glucosylglycerate (GG) and GDP-mannose. The polypeptide is Mannosylglucosylglycerate synthase (Petrotoga mobilis (strain DSM 10674 / SJ95)).